A 596-amino-acid chain; its full sequence is Structural protein precursor VP8 (596 aa).

It localises to the virion. Functionally, 120 subunits of the putative clamp protein VP8b appear to stabilize the capsid shell. This is Structural protein precursor VP8 from Oryza latifolia (Indian wild rice).